Reading from the N-terminus, the 250-residue chain is MTMPLRGLGPPDDTGVREVSTGDDHHYAMWDAAYVLGALSAADRREFEAHLAGCPECRGAVTELCGVPALLSQLDRDEVAAISESAPTVVASGLSPELLPSLLAAVHRRRRRTRLITWVASSAAAAVLAIGVLVGVQGHSAAPQRAAVSALPMAQVGTQLLASTVSISGEPWGTFINLRCVCLAPPYASHDTLAMVVVGRDGSQTRLATWLAEPGHTATPAGSISTPVDQIAAVQVVAADTGQVLLQRSL.

Residues 1 to 115 (MTMPLRGLGP…VHRRRRRTRL (115 aa)) lie on the Cytoplasmic side of the membrane. Residues 116–136 (ITWVASSAAAAVLAIGVLVGV) traverse the membrane as a helical segment. The Extracellular portion of the chain corresponds to 137 to 250 (QGHSAAPQRA…TGQVLLQRSL (114 aa)).

Interacts with ECF RNA polymerase sigma factor SigL; this should inhibit the interaction of SigL with the RNA polymerase catalytic core. Post-translationally, probably cleaved within the membrane by Rip1 near the cytoplasmic membrane interface.

The protein resides in the cell membrane. Its function is as follows. An anti-sigma factor for extracytoplasmic function (ECF) sigma factor SigL. ECF sigma factors are held in an inactive form by an anti-sigma factor until released by regulated intramembrane proteolysis (RIP). RIP occurs when an extracytoplasmic signal triggers a concerted proteolytic cascade to transmit information and elicit cellular responses. The membrane-spanning regulatory substrate protein is first cut extracytoplasmically (site-1 protease, S1P), then within the membrane itself (site-2 protease, S2P, Rip1), while cytoplasmic proteases finish degrading the regulatory protein, liberating the sigma factor. The polypeptide is Anti-sigma-L factor RslA (rslA) (Mycobacterium tuberculosis (strain ATCC 35801 / TMC 107 / Erdman)).